A 445-amino-acid chain; its full sequence is MKYSAEEIIEVYQMLNEEDLDIRSVTLSINTLFAISDDLDKSLKKLEEINNFLERFSKIVDEVGSKYGIRIVTKRVSVSPIQFFLEVLDEKDGIELAKYLDRIAERNNIDYISGYSAFADKGFTRGSLRVLKTLTDALNKTKRLAGMINAASTMSGMNIDAIKIFVDRIFEIPPESSSRTAIMSNVPPDSPFVPSAHHGMGMPEATINVAVSGPGVIKAAIERSKPKTLQELHDIIKRAAFKITRLGELVGRTVAENMGINFTTVDLSLAPSPKVGDSVAEIIETMGIEKIGGHGSLAALAILMDAVKKGGAMATSSVGGLSSAFIPVSEDAVMSERSLEGYIDFYTLIALSSVCNSGIDMVGVSKSQGKDKVIGLISDILALGISLNKILGARIIPIDSPPGSYIDLGGLLGKIVVMKLKDVNVSKFTSYRGFIPSTVKRLELG.

The protein belongs to the UPF0210 family.

The chain is UPF0210 protein STK_02450 from Sulfurisphaera tokodaii (strain DSM 16993 / JCM 10545 / NBRC 100140 / 7) (Sulfolobus tokodaii).